The primary structure comprises 68 residues: Inhibitor of trypsin and hageman factor (68 aa).

Ser-1 carries the N-acetylserine modification. Cys-3 and Cys-48 are joined by a disulfide.

Belongs to the protease inhibitor I13 (potato type I serine protease inhibitor) family.

Its function is as follows. Specifically inhibits both trypsin and activated Hageman factor. This chain is Inhibitor of trypsin and hageman factor, found in Cucurbita maxima (Pumpkin).